Here is a 449-residue protein sequence, read N- to C-terminus: Tubulin beta-7 chain (449 aa).

Q11, E69, S138, G142, T143, G144, N204, and N226 together coordinate GTP. E69 is a Mg(2+) binding site. The tract at residues 422 to 449 is disordered; the sequence is YQQYQDATADEEGEYEEEEAEYEQEETY. Over residues 429–449 the composition is skewed to acidic residues; the sequence is TADEEGEYEEEEAEYEQEETY.

The protein belongs to the tubulin family. In terms of assembly, dimer of alpha and beta chains. A typical microtubule is a hollow water-filled tube with an outer diameter of 25 nm and an inner diameter of 15 nM. Alpha-beta heterodimers associate head-to-tail to form protofilaments running lengthwise along the microtubule wall with the beta-tubulin subunit facing the microtubule plus end conferring a structural polarity. Microtubules usually have 13 protofilaments but different protofilament numbers can be found in some organisms and specialized cells. Mg(2+) serves as cofactor.

It localises to the cytoplasm. It is found in the cytoskeleton. Its function is as follows. Tubulin is the major constituent of microtubules, a cylinder consisting of laterally associated linear protofilaments composed of alpha- and beta-tubulin heterodimers. Microtubules grow by the addition of GTP-tubulin dimers to the microtubule end, where a stabilizing cap forms. Below the cap, tubulin dimers are in GDP-bound state, owing to GTPase activity of alpha-tubulin. The sequence is that of Tubulin beta-7 chain (TUBB7) from Arabidopsis thaliana (Mouse-ear cress).